The sequence spans 494 residues: Ketol-acid reductoisomerase (NADP(+)) (494 aa).

Residues 14-208 form the KARI N-terminal Rossmann domain; sequence LDQLGRCRFM…GGHRAGCLES (195 aa). NADP(+) contacts are provided by residues 45–48, Arg-68, Arg-76, Ser-78, and 108–110; these read CGAQ and DKQ. His-132 is an active-site residue. Residue Gly-158 participates in NADP(+) binding. KARI C-terminal knotted domains are found at residues 209–344 and 345–487; these read SFVA…NYPE and SDVE…MSDM. Mg(2+) is bound by residues Asp-217, Glu-221, Glu-389, and Glu-393. Residue Ser-414 coordinates substrate.

Belongs to the ketol-acid reductoisomerase family. Mg(2+) is required as a cofactor.

It catalyses the reaction (2R)-2,3-dihydroxy-3-methylbutanoate + NADP(+) = (2S)-2-acetolactate + NADPH + H(+). The enzyme catalyses (2R,3R)-2,3-dihydroxy-3-methylpentanoate + NADP(+) = (S)-2-ethyl-2-hydroxy-3-oxobutanoate + NADPH + H(+). The protein operates within amino-acid biosynthesis; L-isoleucine biosynthesis; L-isoleucine from 2-oxobutanoate: step 2/4. It functions in the pathway amino-acid biosynthesis; L-valine biosynthesis; L-valine from pyruvate: step 2/4. In terms of biological role, involved in the biosynthesis of branched-chain amino acids (BCAA). Catalyzes an alkyl-migration followed by a ketol-acid reduction of (S)-2-acetolactate (S2AL) to yield (R)-2,3-dihydroxy-isovalerate. In the isomerase reaction, S2AL is rearranged via a Mg-dependent methyl migration to produce 3-hydroxy-3-methyl-2-ketobutyrate (HMKB). In the reductase reaction, this 2-ketoacid undergoes a metal-dependent reduction by NADPH to yield (R)-2,3-dihydroxy-isovalerate. In Aliivibrio fischeri (strain ATCC 700601 / ES114) (Vibrio fischeri), this protein is Ketol-acid reductoisomerase (NADP(+)).